The chain runs to 130 residues: MKILVAVAVFFLVSTQLSAEEIGANDDLNYWSDWSDSDQIKEALPEPFEHILQRIARRPKPQQFFGLMGKRDADSSIEKQVALLKALYGHGQISHKRHKTDSFVGLMGKRALNSVAFERSAMQNYERRRK.

The signal sequence occupies residues 1-19 (MKILVAVAVFFLVSTQLSA). Positions 20–56 (EEIGANDDLNYWSDWSDSDQIKEALPEPFEHILQRIA) are excised as a propeptide. Residues Met-68 and Met-107 each carry the methionine amide modification.

The protein belongs to the tachykinin family. In terms of processing, the substance P form is cleaved at Pro-59 by the prolyl endopeptidase FAP (seprase) activity (in vitro). Substance P is also cleaved and degraded by Angiotensin-converting enzyme (ACE) and neprilysin (MME).

Its subcellular location is the secreted. Its function is as follows. Tachykinins are active peptides which excite neurons, evoke behavioral responses, are potent vasodilators and secretagogues, and contract (directly or indirectly) many smooth muscles. The sequence is that of Protachykinin-1 (TAC1) from Mesocricetus auratus (Golden hamster).